Here is a 1340-residue protein sequence, read N- to C-terminus: Thioester-containing protein 1 allele S1 (1340 aa).

The signal sequence occupies residues 1-21 (MWQFIRSRILTVIIFIGAAHG). Residues Asn-68, Asn-199, Asn-242, Asn-312, and Asn-481 are each glycosylated (N-linked (GlcNAc...) asparagine). Residues 580–609 (ENEFDIFHSLGLFARTLDDILFDSANEKTG) are may contain the cleavage site. N-linked (GlcNAc...) asparagine glycosylation is found at Asn-637, Asn-728, Asn-813, and Asn-828. The isoglutamyl cysteine thioester (Cys-Gln) cross-link spans 859-862 (CGEQ). 3 disulfide bridges follow: Cys-1217–Cys-1283, Cys-1326–Cys-1338, and Cys-1329–Cys-1334.

Heterodimer of a TEP1-N chain and an TEP1-C chain non-covalently linked. Forms a complex composed of TEP1-N and TEP1-C heterodimer, LRIM1 and APL1C; the interaction stabilizes TEP1-N and TEP1-C heterodimer, prevents its binding to tissues while circulating in the hemolymph and protects the thioester bond from hydrolysis. Mature TEP1 and to a lesser extent full-length TEP1 interact with SPCLIP1; the interaction is induced by microbial infection. In the hemolymph, the full-length protein is cleaved by an unknow protease into a 75kDa N-terminal (TEP1-N) chain and an 80kDa C-terminal (TEP1-C) chain which remain non-covalently linked. The TEP1-C chain contains the thioester bond which covalently binds to the pathogen surface. Cleavage is induced by bacterial infection or aseptic wound injury. During embryonic and pupal development, the cleaved form is the predominant form. Post-translationally, N-glycosylated. In terms of tissue distribution, specifically expressed in hemocytes (at protein level).

The protein localises to the secreted. Functionally, plays an essential role in the innate immune response to bacteria and protozoa infection. After proteolytic cleavage, the protein C-terminus binds covalently through a thioester bond to the pathogen surface resulting in pathogen clearance either by melanization or lysis. Initiate the recruitment and activation of a cascade of proteases, mostly of CLIP-domain serine proteases, which leads to the proteolytic cleavage of the prophenoloxidase (PPO) into active phenoloxidase (PO), the rate-limiting enzyme in melanin biosynthesis. In response to parasite P.berghei-mediated infection, binds to and mediates killing of ookinetes, as they egress from midgut epithelial cells into the basal labyrinth, by both lysis and melanization. During bacterial infection, binds to both Gram-positive and Gram-negative bacteria but only promotes phagocytosis of Gram-negative bacteria. Promotes the accumulation of SPCLIP1 onto the surface of P.berghei ookinetes and bacterium E.coli which leads to the melanization of the pathogen. Recruits CLIPA2 to bacteria surface. In response to bacterial infection, required for periostial hemocyte aggregation, but not for the aggregation of sessile hemocytes in non-periostial regions. During the late stage of fungus B.bassiana-mediated infection, required for the initiation of hyphae melanization by binding to the surface of hyphae and recruiting prophenoloxidase PPO to them. Plays a role in male fertility by binding to defective sperm cells and promoting their removal during spermatogenesis. Its function is as follows. Binds covalently through a thioester bond to the pathogen surface resulting in pathogen clearance. The chain is Thioester-containing protein 1 allele S1 from Anopheles gambiae (African malaria mosquito).